Here is a 587-residue protein sequence, read N- to C-terminus: Membrane protein insertase YidC (587 aa).

Transmembrane regions (helical) follow at residues 5 to 25 (SVIGFSLIAVIMIVWLQFMKP), 365 to 385 (GLIIIIFAFLIKTVTWPLSLA), 430 to 450 (LGGCLPTVIQMPLLFAMFYVF), 480 to 500 (LPLYGDHIALMPILMAVTVFF), and 516 to 536 (IMIWMFPAMMLLFFNNMPSGL).

It belongs to the OXA1/ALB3/YidC family. Type 1 subfamily. In terms of assembly, interacts with the Sec translocase complex via SecD. Specifically interacts with transmembrane segments of nascent integral membrane proteins during membrane integration.

Its subcellular location is the cell inner membrane. Its function is as follows. Required for the insertion and/or proper folding and/or complex formation of integral membrane proteins into the membrane. Involved in integration of membrane proteins that insert both dependently and independently of the Sec translocase complex, as well as at least some lipoproteins. Aids folding of multispanning membrane proteins. In Chlorobaculum parvum (strain DSM 263 / NCIMB 8327) (Chlorobium vibrioforme subsp. thiosulfatophilum), this protein is Membrane protein insertase YidC.